A 445-amino-acid chain; its full sequence is Exodeoxyribonuclease 7 large subunit (445 aa).

The protein belongs to the XseA family. In terms of assembly, heterooligomer composed of large and small subunits.

It is found in the cytoplasm. It carries out the reaction Exonucleolytic cleavage in either 5'- to 3'- or 3'- to 5'-direction to yield nucleoside 5'-phosphates.. Functionally, bidirectionally degrades single-stranded DNA into large acid-insoluble oligonucleotides, which are then degraded further into small acid-soluble oligonucleotides. This is Exodeoxyribonuclease 7 large subunit from Staphylococcus aureus (strain USA300 / TCH1516).